The following is a 70-amino-acid chain: Large ribosomal subunit protein bL31 (70 aa).

Residues C16, C18, C37, and C40 each coordinate Zn(2+).

The protein belongs to the bacterial ribosomal protein bL31 family. Type A subfamily. As to quaternary structure, part of the 50S ribosomal subunit. Zn(2+) serves as cofactor.

Functionally, binds the 23S rRNA. The protein is Large ribosomal subunit protein bL31 of Erwinia tasmaniensis (strain DSM 17950 / CFBP 7177 / CIP 109463 / NCPPB 4357 / Et1/99).